A 140-amino-acid polypeptide reads, in one-letter code: Large ribosomal subunit protein uL14 (140 aa).

Belongs to the universal ribosomal protein uL14 family.

This Brugia malayi (Filarial nematode worm) protein is Large ribosomal subunit protein uL14 (RPL23).